A 75-amino-acid polypeptide reads, in one-letter code: Caerin-1.1 (75 aa).

The first 22 residues, 1 to 22 (MASLKKSLFLVLLLGFVSVSIC), serve as a signal peptide directing secretion. Residues 23-49 (EEEKRQEDEDEHEEEGESQEEGSEEKR) constitute a propeptide that is removed on maturation. Residues 24-49 (EEKRQEDEDEHEEEGESQEEGSEEKR) form a disordered region. Positions 30-45 (DEDEHEEEGESQEEGS) are enriched in acidic residues. Residue leucine 74 is modified to Leucine amide.

Belongs to the frog skin active peptide (FSAP) family. Caerin subfamily. The major product is Caerin-1.1; in addition, different peptides are produced that are missing some amino acid residues at the N-terminus or C-terminus. Caerin-1.1.1 and Caerin-1.1.4 are inactive. As to expression, expressed by the skin parotoid and/or rostral glands.

It is found in the secreted. Its function is as follows. Antimicrobial peptide with antibacterial and antiviral activities. Adopts an alpha helical conformation which can disrupt bacterial membranes. Inhibits the formation of NO by neuronal nitric oxide synthase (nNOS) at micromolar concentrations. Acts by a non-competitive mechanism, probably by binding to calcium/calmodulin and as a consequence blocking calmodulin attachment to nNOS. In terms of biological role, is inactive. This Ranoidea caerulea (Green tree frog) protein is Caerin-1.1.